We begin with the raw amino-acid sequence, 174 residues long: UPF0340 protein SAHV_2098 (174 aa).

This sequence belongs to the UPF0340 family.

The chain is UPF0340 protein SAHV_2098 from Staphylococcus aureus (strain Mu3 / ATCC 700698).